A 161-amino-acid polypeptide reads, in one-letter code: Regulator of ribonuclease activity A (161 aa).

It belongs to the RraA family. Homotrimer. Binds to both RNA-binding sites in the C-terminal region of Rne and to RhlB.

The protein resides in the cytoplasm. Its function is as follows. Globally modulates RNA abundance by binding to RNase E (Rne) and regulating its endonucleolytic activity. Can modulate Rne action in a substrate-dependent manner by altering the composition of the degradosome. Modulates RNA-binding and helicase activities of the degradosome. The chain is Regulator of ribonuclease activity A from Salmonella agona (strain SL483).